The primary structure comprises 236 residues: Small ribosomal subunit protein uS2c (236 aa).

This sequence belongs to the universal ribosomal protein uS2 family.

It localises to the plastid. Its subcellular location is the chloroplast. This is Small ribosomal subunit protein uS2c (rps2) from Chloranthus spicatus (Chulantree).